The chain runs to 201 residues: Ribosome maturation factor RimM (201 aa).

In terms of domain architecture, PRC barrel spans 94-168 (EDEYYHADLI…RLVADPPLGL (75 aa)). The tract at residues 164–201 (PPLGLLDDTRPPAGVEGEVEEDPGVGIDEDGDGKGGAS) is disordered. Residues 180-194 (GEVEEDPGVGIDEDG) show a composition bias toward acidic residues.

The protein belongs to the RimM family. Binds ribosomal protein uS19.

The protein resides in the cytoplasm. Its function is as follows. An accessory protein needed during the final step in the assembly of 30S ribosomal subunit, possibly for assembly of the head region. Essential for efficient processing of 16S rRNA. May be needed both before and after RbfA during the maturation of 16S rRNA. It has affinity for free ribosomal 30S subunits but not for 70S ribosomes. The chain is Ribosome maturation factor RimM from Rhodospirillum rubrum (strain ATCC 11170 / ATH 1.1.1 / DSM 467 / LMG 4362 / NCIMB 8255 / S1).